A 540-amino-acid chain; its full sequence is 2,3-bisphosphoglycerate-independent phosphoglycerate mutase (540 aa).

Residues aspartate 24 and serine 74 each coordinate Mn(2+). The Phosphoserine intermediate role is filled by serine 74. Substrate-binding positions include histidine 135, 165-166 (RD), arginine 197, arginine 203, 268-271 (RPDR), and lysine 341. Mn(2+) is bound by residues aspartate 408, histidine 412, aspartate 449, histidine 450, and histidine 467.

The protein belongs to the BPG-independent phosphoglycerate mutase family. Monomer. It depends on Mn(2+) as a cofactor.

The catalysed reaction is (2R)-2-phosphoglycerate = (2R)-3-phosphoglycerate. Its pathway is carbohydrate degradation; glycolysis; pyruvate from D-glyceraldehyde 3-phosphate: step 3/5. Its function is as follows. Catalyzes the interconversion of 2-phosphoglycerate and 3-phosphoglycerate. This Prochlorococcus marinus (strain SARG / CCMP1375 / SS120) protein is 2,3-bisphosphoglycerate-independent phosphoglycerate mutase.